Consider the following 613-residue polypeptide: Transcription factor MTB1 (613 aa).

The segment at 48–130 (LQNKLSDLVE…RVLQKLHMLF (83 aa)) is JAZ-interaction domain. 2 disordered regions span residues 256 to 285 (EKNEGNNPRLSNSGAVTERTDGNPKIFGHD) and 391 to 441 (AHNV…AERQ). The segment covering 260-270 (GNNPRLSNSGA) has biased composition (polar residues). 2 stretches are compositionally biased toward basic and acidic residues: residues 394–417 (VESEHSDVEASCKEDRAGPVDEKR) and 427–441 (NGREEPLNHVEAERQ). The tract at residues 430-443 (EEPLNHVEAERQRR) is basic motif; degenerate. The bHLH domain maps to 430–479 (EEPLNHVEAERQRREKLNQRFYALRAVVPNISKMDKASLLGDAIAYITEL). The interval 444 to 479 (EKLNQRFYALRAVVPNISKMDKASLLGDAIAYITEL) is helix-loop-helix motif. The tract at residues 490 to 513 (RELRLGSTSRDAITSEDSPSSEIQ) is disordered. Polar residues predominate over residues 495 to 512 (GSTSRDAITSEDSPSSEI).

In terms of assembly, interacts with MYC2 (via N-terminus). MTB1 competes with MED25 for binding to MYC2. Interacts (via N-terminus) with JAZ7.

Its subcellular location is the nucleus. Its function is as follows. Transcription factor that negatively regulates jasmonate (JA) signaling. Negatively regulates JA-dependent response to wounding, JA-induced expression of defense genes, JA-dependent responses against herbivorous insects, and JA-dependent resistance against Botrytis cinerea infection. Plays a positive role in resistance against the bacterial pathogen Pseudomonas syringae pv tomato DC3000. In Solanum lycopersicum (Tomato), this protein is Transcription factor MTB1.